A 612-amino-acid chain; its full sequence is Threonine--tRNA ligase (612 aa).

The catalytic stretch occupies residues 218 to 509 (DHRKLGVELG…LSEHFGGNFP (292 aa)). Zn(2+) is bound by residues Cys-310, His-361, and His-486.

It belongs to the class-II aminoacyl-tRNA synthetase family. As to quaternary structure, homodimer. The cofactor is Zn(2+).

It localises to the cytoplasm. The catalysed reaction is tRNA(Thr) + L-threonine + ATP = L-threonyl-tRNA(Thr) + AMP + diphosphate + H(+). In terms of biological role, catalyzes the attachment of threonine to tRNA(Thr) in a two-step reaction: L-threonine is first activated by ATP to form Thr-AMP and then transferred to the acceptor end of tRNA(Thr). Also edits incorrectly charged L-seryl-tRNA(Thr). The chain is Threonine--tRNA ligase from Helicobacter pylori (strain ATCC 700392 / 26695) (Campylobacter pylori).